A 515-amino-acid polypeptide reads, in one-letter code: 1-pyrroline-5-carboxylate dehydrogenase (515 aa).

Residues Glu-286 and Cys-320 contribute to the active site.

It belongs to the aldehyde dehydrogenase family. RocA subfamily.

It catalyses the reaction L-glutamate 5-semialdehyde + NAD(+) + H2O = L-glutamate + NADH + 2 H(+). It participates in amino-acid degradation; L-proline degradation into L-glutamate; L-glutamate from L-proline: step 2/2. The sequence is that of 1-pyrroline-5-carboxylate dehydrogenase from Bacillus cereus (strain ATCC 10987 / NRS 248).